The following is a 982-amino-acid chain: Glutamate [NMDA] receptor subunit 1 (982 aa).

The signal sequence occupies residues 1 to 16 (MAFAVWFLSTFVIVAA). The Extracellular segment spans residues 17-561 (QRHMALEHEG…TLVSFLQPFS (545 aa)). N-linked (GlcNAc...) asparagine glycans are attached at residues Asn247, Asn303, Asn334, Asn386, Asn443, Asn470, and Asn490. Glycine contacts are provided by residues 518–520 (PLT) and Arg525. A helical membrane pass occupies residues 562–582 (NTLWILVMVSVHVVALVLYLL). Residues 583 to 639 (DRFSPFGRFKLSHSDSNEEKALNLSSAVWFAWGVLLNSGIGEGTPRSFSARVLGMVW) are Cytoplasmic-facing. Residues 640–660 (AGFAMIIVASYTANLAAFLVL) traverse the membrane as a helical segment. Residues 661 to 819 (ERPKTKLSGI…KTPNTLGLKN (159 aa)) are Extracellular-facing. Residue Asn681 is glycosylated (N-linked (GlcNAc...) asparagine). The glycine site is built by Ser691 and Asp735. Residues 820 to 840 (MAGVFILVGVGIAGGVGLIII) form a helical membrane-spanning segment. The Cytoplasmic portion of the chain corresponds to 841–982 (EVIYKKHQVK…YTSDVSHLVV (142 aa)). The interval 934–982 (EIGKPGQSPKVIGGPPHPMLGKTRPQAQQNLLPPRYSPGYTSDVSHLVV) is disordered. Residues 972 to 982 (GYTSDVSHLVV) show a composition bias toward polar residues.

The protein belongs to the glutamate-gated ion channel (TC 1.A.10.1) family. Forms a heteromeric NMDA channel with Nmdar2.

It is found in the cell membrane. It localises to the postsynaptic cell membrane. The protein localises to the postsynaptic density. NMDA receptor subtype of glutamate-gated ion channels with high calcium permeability and voltage-dependent sensitivity to magnesium. Mediated by glycine. This protein plays a key role in synaptic plasticity, synaptogenesis, excitotoxicity, memory acquisition and learning. It mediates neuronal functions in glutamate neurotransmission. Is involved in the cell surface targeting of NMDA receptors. Plays a role in associative learning and in long-term memory consolidation. The protein is Glutamate [NMDA] receptor subunit 1 of Drosophila willistoni (Fruit fly).